The following is a 253-amino-acid chain: Shikimate dehydrogenase (NADP(+)) (253 aa).

Residues 13–15 and T59 each bind shikimate; that span reads SIS. The active-site Proton acceptor is the K63. An NADP(+)-binding site is contributed by E74. Residues N83 and D94 each contribute to the shikimate site. NADP(+) is bound by residues 115–119, 139–144, and V199; these read GAGGA and NRTIER. Y201 is a shikimate binding site. Position 221 (G221) interacts with NADP(+).

The protein belongs to the shikimate dehydrogenase family. Homodimer.

The enzyme catalyses shikimate + NADP(+) = 3-dehydroshikimate + NADPH + H(+). It functions in the pathway metabolic intermediate biosynthesis; chorismate biosynthesis; chorismate from D-erythrose 4-phosphate and phosphoenolpyruvate: step 4/7. In terms of biological role, involved in the biosynthesis of the chorismate, which leads to the biosynthesis of aromatic amino acids. Catalyzes the reversible NADPH linked reduction of 3-dehydroshikimate (DHSA) to yield shikimate (SA). The sequence is that of Shikimate dehydrogenase (NADP(+)) from Thermotoga maritima (strain ATCC 43589 / DSM 3109 / JCM 10099 / NBRC 100826 / MSB8).